Consider the following 194-residue polypeptide: Large ribosomal subunit protein bL25 (194 aa).

The protein belongs to the bacterial ribosomal protein bL25 family. CTC subfamily. In terms of assembly, part of the 50S ribosomal subunit; part of the 5S rRNA/L5/L18/L25 subcomplex. Contacts the 5S rRNA. Binds to the 5S rRNA independently of L5 and L18.

Functionally, this is one of the proteins that binds to the 5S RNA in the ribosome where it forms part of the central protuberance. The sequence is that of Large ribosomal subunit protein bL25 from Neorickettsia sennetsu (strain ATCC VR-367 / Miyayama) (Ehrlichia sennetsu).